The chain runs to 433 residues: Histidine--tRNA ligase (433 aa).

It belongs to the class-II aminoacyl-tRNA synthetase family. In terms of assembly, homodimer.

It localises to the cytoplasm. It carries out the reaction tRNA(His) + L-histidine + ATP = L-histidyl-tRNA(His) + AMP + diphosphate + H(+). The polypeptide is Histidine--tRNA ligase (Crocosphaera subtropica (strain ATCC 51142 / BH68) (Cyanothece sp. (strain ATCC 51142))).